Here is a 752-residue protein sequence, read N- to C-terminus: Photosystem I P700 chlorophyll a apoprotein A1 (752 aa).

Transmembrane regions (helical) follow at residues 73–96 (IFSA…FHGA), 159–182 (LYWT…FHYH), 198–222 (MNHH…HIAL), 294–312 (IAHH…GHMY), 349–372 (WHAQ…HHMY), 388–414 (LSLF…IFMV), 436–458 (AIIS…FYIH), and 533–551 (FMVH…LILL). [4Fe-4S] cluster-binding residues include Cys575 and Cys584. A run of 2 helical transmembrane segments spans residues 591–612 (HVFL…HFSW) and 666–688 (SSAY…MFLF). His677 serves as a coordination point for chlorophyll a'. Residues Met685 and Tyr693 each contribute to the chlorophyll a site. Trp694 is a binding site for phylloquinone. Residues 726–746 (AVGLAHYLLGGIGTTWAFFLA) traverse the membrane as a helical segment.

It belongs to the PsaA/PsaB family. The PsaA/B heterodimer binds the P700 chlorophyll special pair and subsequent electron acceptors. PSI consists of a core antenna complex that captures photons, and an electron transfer chain that converts photonic excitation into a charge separation. The eukaryotic PSI reaction center is composed of at least 11 subunits. It depends on P700 is a chlorophyll a/chlorophyll a' dimer, A0 is one or more chlorophyll a, A1 is one or both phylloquinones and FX is a shared 4Fe-4S iron-sulfur center. as a cofactor.

It is found in the plastid. Its subcellular location is the chloroplast thylakoid membrane. It carries out the reaction reduced [plastocyanin] + hnu + oxidized [2Fe-2S]-[ferredoxin] = oxidized [plastocyanin] + reduced [2Fe-2S]-[ferredoxin]. PsaA and PsaB bind P700, the primary electron donor of photosystem I (PSI), as well as the electron acceptors A0, A1 and FX. PSI is a plastocyanin/cytochrome c6-ferredoxin oxidoreductase, converting photonic excitation into a charge separation, which transfers an electron from the donor P700 chlorophyll pair to the spectroscopically characterized acceptors A0, A1, FX, FA and FB in turn. Oxidized P700 is reduced on the lumenal side of the thylakoid membrane by plastocyanin or cytochrome c6. This is Photosystem I P700 chlorophyll a apoprotein A1 from Thalassiosira pseudonana (Marine diatom).